The sequence spans 1400 residues: DNA-directed RNA polymerase subunit beta' (1400 aa).

Residues Cys-71, Cys-73, Cys-86, and Cys-89 each contribute to the Zn(2+) site. Residues Asp-462, Asp-464, and Asp-466 each coordinate Mg(2+). Residues Cys-810, Cys-884, Cys-891, and Cys-894 each coordinate Zn(2+).

The protein belongs to the RNA polymerase beta' chain family. The RNAP catalytic core consists of 2 alpha, 1 beta, 1 beta' and 1 omega subunit. When a sigma factor is associated with the core the holoenzyme is formed, which can initiate transcription. Mg(2+) is required as a cofactor. Requires Zn(2+) as cofactor.

It carries out the reaction RNA(n) + a ribonucleoside 5'-triphosphate = RNA(n+1) + diphosphate. Functionally, DNA-dependent RNA polymerase catalyzes the transcription of DNA into RNA using the four ribonucleoside triphosphates as substrates. The protein is DNA-directed RNA polymerase subunit beta' of Rhodopseudomonas palustris (strain TIE-1).